We begin with the raw amino-acid sequence, 282 residues long: Parvulin-like PPIase (282 aa).

Positions 1-20 (MKKLSVIFLSVSMLSGIAFA) are cleaved as a signal peptide. A PpiC domain is found at 138–231 (KEQIKVAHIL…FGWHIIKVLE (94 aa)).

Belongs to the PpiC/parvulin rotamase family.

The protein resides in the cell outer membrane. The enzyme catalyses [protein]-peptidylproline (omega=180) = [protein]-peptidylproline (omega=0). This Rickettsia felis (strain ATCC VR-1525 / URRWXCal2) (Rickettsia azadi) protein is Parvulin-like PPIase (plp).